The sequence spans 341 residues: MNVEEFDYDLPESLIAQTPLKDRDQSRLLVLGRNSGNIEHKHFKDVINYLETGDTLVLNDTRVMPARLFGLKEETGAKVEMLMLTRIENNDWEVLLKPAKRIKVGNKLSFGEGKIIAECIEELDQGGRIMRLHYEGILEERLNELGEMPLPPYIKERLDDPDRYQTVYAKESGSAAAPTAGLHFTDELLDEIRAKGINIAFITLHVGLGTFRPVSVEDINDHEMHSEYYQMTQETANLLNQTKKEGHRIISVGTTSTRTLETIRRDYNEFVAVSGWTDIFIYPGFTYKAIDGLITNFHLPKSTLVMLVSAFSSRENILNAYKEAVKLEYRFFSFGDAMLII.

It belongs to the QueA family. As to quaternary structure, monomer.

The protein localises to the cytoplasm. It catalyses the reaction 7-aminomethyl-7-carbaguanosine(34) in tRNA + S-adenosyl-L-methionine = epoxyqueuosine(34) in tRNA + adenine + L-methionine + 2 H(+). It functions in the pathway tRNA modification; tRNA-queuosine biosynthesis. In terms of biological role, transfers and isomerizes the ribose moiety from AdoMet to the 7-aminomethyl group of 7-deazaguanine (preQ1-tRNA) to give epoxyqueuosine (oQ-tRNA). The chain is S-adenosylmethionine:tRNA ribosyltransferase-isomerase from Staphylococcus haemolyticus (strain JCSC1435).